The primary structure comprises 59 residues: Large ribosomal subunit protein uL30 (59 aa).

This sequence belongs to the universal ribosomal protein uL30 family. In terms of assembly, part of the 50S ribosomal subunit.

This is Large ribosomal subunit protein uL30 from Clostridium beijerinckii (strain ATCC 51743 / NCIMB 8052) (Clostridium acetobutylicum).